The primary structure comprises 220 residues: Peptidyl-tRNA hydrolase (220 aa).

Position 14 (Tyr14) interacts with tRNA. His19 functions as the Proton acceptor in the catalytic mechanism. TRNA is bound by residues Phe60, Asn62, and Asn106.

The protein belongs to the PTH family. In terms of assembly, monomer.

The protein localises to the cytoplasm. It catalyses the reaction an N-acyl-L-alpha-aminoacyl-tRNA + H2O = an N-acyl-L-amino acid + a tRNA + H(+). Functionally, hydrolyzes ribosome-free peptidyl-tRNAs (with 1 or more amino acids incorporated), which drop off the ribosome during protein synthesis, or as a result of ribosome stalling. Its function is as follows. Catalyzes the release of premature peptidyl moieties from peptidyl-tRNA molecules trapped in stalled 50S ribosomal subunits, and thus maintains levels of free tRNAs and 50S ribosomes. This is Peptidyl-tRNA hydrolase from Campylobacter hominis (strain ATCC BAA-381 / DSM 21671 / CCUG 45161 / LMG 19568 / NCTC 13146 / CH001A).